The chain runs to 354 residues: UDP-N-acetylglucosamine--N-acetylmuramyl-(pentapeptide) pyrophosphoryl-undecaprenol N-acetylglucosamine transferase 1 (354 aa).

UDP-N-acetyl-alpha-D-glucosamine is bound by residues 12–14 (TAG), Arg163, Ser193, and Gln287.

It belongs to the glycosyltransferase 28 family. MurG subfamily.

Its subcellular location is the cell membrane. The catalysed reaction is di-trans,octa-cis-undecaprenyl diphospho-N-acetyl-alpha-D-muramoyl-L-alanyl-D-glutamyl-meso-2,6-diaminopimeloyl-D-alanyl-D-alanine + UDP-N-acetyl-alpha-D-glucosamine = di-trans,octa-cis-undecaprenyl diphospho-[N-acetyl-alpha-D-glucosaminyl-(1-&gt;4)]-N-acetyl-alpha-D-muramoyl-L-alanyl-D-glutamyl-meso-2,6-diaminopimeloyl-D-alanyl-D-alanine + UDP + H(+). It functions in the pathway cell wall biogenesis; peptidoglycan biosynthesis. Its function is as follows. Cell wall formation. Catalyzes the transfer of a GlcNAc subunit on undecaprenyl-pyrophosphoryl-MurNAc-pentapeptide (lipid intermediate I) to form undecaprenyl-pyrophosphoryl-MurNAc-(pentapeptide)GlcNAc (lipid intermediate II). The protein is UDP-N-acetylglucosamine--N-acetylmuramyl-(pentapeptide) pyrophosphoryl-undecaprenol N-acetylglucosamine transferase 1 of Bacillus thuringiensis (strain Al Hakam).